A 1316-amino-acid polypeptide reads, in one-letter code: Tetratricopeptide repeat protein 21B (1316 aa).

TPR repeat units follow at residues 108–141 (EKALYHAGLFLWHIGRHDKAREYIDRMIKISDGS), 145–178 (HVLKAWLDITRGKEPYTKKALKYFEEGLQDGNDT), 180–211 (ALLGKAQCLEMRQNYSGALETVNQIIVNFPSF), 285–323 (AQLFYNITLAFSRTCGRSQLILQKIQTLLERAFSLNPQQ), 324–357 (SEFATELGYQMILQGRVKEALKWYKTAMTLDETS), 492–525 (LQTVFLIAKVKYLSGDIEAAFNNLQHCLEHNPSY), 563–596 (PLYHLIKAQSQKKMGEIADAIKTLHMAMSLPGMK), 617–650 (LSIFLELIDVHRLNGEQHEATKVLQDAIHEFSGT), 722–755 (PRSFLLLGDAYMNILEPEEAIVAYEQALNQNPKD), 757–789 (TLASKMGKALIKTHNYSMAITYYEAALKTGQKN), 791–822 (LCYDLAELLLKLKWYDKAEKVLQHALAHEPVN), 831–864 (GRCQVLLAKVYSKMEKLGDAITALQQARELQARV), 884–917 (AEICAEIAKHSVAQRDYEKAIKFYREALVHCETD), 919–951 (KIMLELARLYLAQDDPDSCLRQCALLLQSDQDN), 952–985 (EAATMMMADLMFRKQDYEQAVFHLQQLLERKPDN), 1023–1056 (PGFQYCKGLYLWYTGEPNDALRHFNKARKDRDWG), 1197–1230 (EKSWLLLADIYIQSAKYDMAEDLLKRCLRHNRSC), 1232–1264 (KAYEYMGYIMEKEQAYTDAALNYEMAWKYSNRT), and 1266–1299 (PAVGYKLAFNYLKAKRYVDSIDICHQVLEAHPTY).

Belongs to the TTC21 family. As to quaternary structure, component of the IFT complex A (IFT-A) complex. IFT-A complex is divided into a core subcomplex composed of IFT122:IFT140:WDR19 which is associated with TULP3 and a peripheral subcomplex composed of IFT43:WDR35:TTC21B. Interacts directy with WDR35 and TTC21B. Interacts with TTC25.

The protein localises to the cytoplasm. It is found in the cytoskeleton. Its subcellular location is the cilium axoneme. Functionally, component of the IFT complex A (IFT-A), a complex required for retrograde ciliary transport and entry into cilia of G protein-coupled receptors (GPCRs). Essential for retrograde trafficking of IFT-1, IFT-B and GPCRs. Negatively modulates the SHH signal transduction. This chain is Tetratricopeptide repeat protein 21B, found in Homo sapiens (Human).